Here is a 507-residue protein sequence, read N- to C-terminus: Maturase K (507 aa).

This sequence belongs to the intron maturase 2 family. MatK subfamily.

It localises to the plastid. The protein localises to the chloroplast. Usually encoded in the trnK tRNA gene intron. Probably assists in splicing its own and other chloroplast group II introns. The chain is Maturase K from Magnolia champaca (Yellow jade orchid tree).